The following is a 211-amino-acid chain: Regulator of G-protein signaling 2 (211 aa).

Disordered regions lie at residues Arg-14–Met-33 and Leu-49–Ala-68. Positions Lys-32 to Gln-66 are necessary for membrane association. The tract at residues Leu-79 to Cys-116 is necessary to inhibit protein synthesis. Positions Ala-83–Cys-199 constitute an RGS domain.

In terms of assembly, interacts with GNAQ. Does not interact with GNAI1 and GNAI3. Interacts with EIF2B5. Interacts with PRKG1 (isoform alpha). Phosphorylated by protein kinase C. Phosphorylation by PRKG1 leads to activation of RGS2 activity. As to expression, expressed in acute myelogenous leukemia (AML) and in acute lymphoblastic leukemia (ALL).

It is found in the cell membrane. Its subcellular location is the cytoplasm. It localises to the nucleus. The protein resides in the nucleolus. The protein localises to the mitochondrion. Its function is as follows. Regulates G protein-coupled receptor signaling cascades. Inhibits signal transduction by increasing the GTPase activity of G protein alpha subunits, thereby driving them into their inactive GDP-bound form. It is involved in the negative regulation of the angiotensin-activated signaling pathway. Plays a role in the regulation of blood pressure in response to signaling via G protein-coupled receptors and GNAQ. Plays a role in regulating the constriction and relaxation of vascular smooth muscle. Binds EIF2B5 and blocks its activity, thereby inhibiting the translation of mRNA into protein. The protein is Regulator of G-protein signaling 2 (RGS2) of Homo sapiens (Human).